Reading from the N-terminus, the 744-residue chain is Spalt-like protein sem-4 (744 aa).

The tract at residues 6–32 (AEMAAVSSRRKQSKPRRMSGEGDAMMS) is disordered. Positions 13–22 (SRRKQSKPRR) are enriched in basic residues. 4 C2H2-type zinc fingers span residues 99–124 (SSCPIQSCSQSFSSPAALTWHVLDAH), 305–327 (NQCILCRRVLSCKSALQMHYRTH), 333–355 (FKCKICQRAFTTKGNLKTHMGVH), and 411–433 (QQCPICQQRFLNAGELAVHITEH). Residues 487-497 (KNDSSPNTDTS) show a composition bias toward polar residues. Disordered stretches follow at residues 487 to 530 (KNDS…RQDI) and 542 to 562 (KLEEPPILEQQVSTTPNPKNE). The segment covering 499 to 509 (VEEKITRDDPP) has biased composition (basic and acidic residues). Residues 513–525 (SLSPSNSSDSSSS) show a composition bias toward low complexity. Polar residues predominate over residues 551–561 (QQVSTTPNPKN). 3 consecutive C2H2-type zinc fingers follow at residues 589–611 (HQCGVCFKHFSSSSALQIHMRTH), 617–639 (FKCDMCGRAFTTRGNLKVHMGTH), and 701–723 (TVCSVCQKVCQSPNELEQHLKEH). Residues 725-744 (NNGSSAAPTPLASAATPPPS) form a disordered region. Over residues 728-744 (SSAAPTPLASAATPPPS) the composition is skewed to low complexity.

Belongs to the sal C2H2-type zinc-finger protein family.

It localises to the nucleus. Transcription factor, involved in positive and negative modulation of transcription. Binds to multiple DNA sequence motifs in the regulatory elements of target genes, including homeobox selector egl-5 and LIM homeobox mec-3. Involved in cell-fate regulation in multiple lineages, including neuronal, mesodermal and vulval. Required to regulate the fate of PLM touch receptor neurons, acting via negative modulation of transcription of egl-5 and mec-3. May modulate gene expression by interacting with different transcription factors during neuronal and mesodermal cell development. Promotes the proliferative sex myoblast (SM) fate, in a cell autonomous manner, acting via the SoxC transcription factor sem-2. Involved in vulval cell-fate determination, acting by regulating expression of homeobox protein lin-39, and may link lin-39 to incoming signaling pathways. Plays a role in detoxification of reactive oxygen species (ROS), by regulating expression of transcription factor skn-1 and the phase II detoxification genes. This chain is Spalt-like protein sem-4, found in Caenorhabditis elegans.